Here is a 321-residue protein sequence, read N- to C-terminus: MMIKNKKKLLFLCLLVILIATAYISFVTGTIKLSFNDLFTKFTTGSNEAVDSIIDLRLPRILIALMVGAMLAVSGALLQAALQNPLAEANIIGVSSGALIMRALCMLFIPQLYFYLPLLSFIGGLIPFLIIILLHSKFRFNAVSMILVGVALFVLLNGVLEILTQNPLMKIPQGLTMKIWSDVYILAVSALLGLILTLLLSPKLNLLNLDDIQARSIGFNIDRYRWLTGLLAVFLASATVAIVGQLAFLGIIVHVVRKLVGGNYRVLIPFSTVIGAWLLLVADLLGRVIQPPLEIPANAILMIVGGPMLIYLICQSQRNRI.

The next 9 membrane-spanning stretches (helical) occupy residues 9 to 29 (LLFLCLLVILIATAYISFVTG), 61 to 81 (ILIALMVGAMLAVSGALLQAA), 89 to 109 (ANIIGVSSGALIMRALCMLFI), 114 to 134 (FYLPLLSFIGGLIPFLIIILL), 143 to 163 (VSMILVGVALFVLLNGVLEIL), 179 to 199 (IWSDVYILAVSALLGLILTLL), 233 to 253 (VFLASATVAIVGQLAFLGIIV), 267 to 287 (LIPFSTVIGAWLLLVADLLGR), and 294 to 314 (EIPANAILMIVGGPMLIYLIC).

This sequence belongs to the binding-protein-dependent transport system permease family. FecCD subfamily.

The protein resides in the cell membrane. Its function is as follows. Part of the binding-protein-dependent transport system for heme-iron. Responsible for the translocation of the substrate across the membrane. The polypeptide is Probable heme-iron transport system permease protein IsdF (isdF) (Staphylococcus aureus (strain NCTC 8325 / PS 47)).